The sequence spans 671 residues: cGMP-dependent protein kinase 1 (671 aa).

At S2 the chain carries N-acetylserine. Positions 2-59 (SELEEDFAKILMLKEERIKELEKRLSEKEEEIQELKRKLHKCQSVLPVPSTHIGPRTT) form a coiled coil. Positions 2–102 (SELEEDFAKI…LIKEAILDND (101 aa)) are required for dimerization. The tract at residues 9–44 (AKILMLKEERIKELEKRLSEKEEEIQELKRKLHKCQ) is leucine-zipper. The interval 50 to 75 (PSTHIGPRTTRAQGISAEPQTYRSFH) is autoinhibitory domain. At T59 the chain carries Phosphothreonine; by autocatalysis. The interval 103–220 (FMKNLELSQI…EYMEFLKSVP (118 aa)) is cGMP-binding, high affinity. Residues 167–170 (GELA), 177–178 (RT), R282, 291–294 (GEKA), 301–302 (RT), and Y336 each bind 3',5'-cyclic GMP. The segment at 221–341 (TFQSLPDEIL…SNKAYEDAEA (121 aa)) is cGMP-binding, low affinity. Residues 360–619 (FNIIDTLGVG…VKDIQKHKWF (260 aa)) form the Protein kinase domain. ATP is bound by residues 366-374 (LGVGGFGRV) and K390. The Proton acceptor role is filled by D484. The residue at position 515 (T515) is a Phosphothreonine. The region spanning 620–671 (EGFNWEGLRKGTLTPPIIPSVASPTDTSNFDSFPEDSDEPPPDDNSGWDIDF) is the AGC-kinase C-terminal domain. Residues 635 to 671 (PIIPSVASPTDTSNFDSFPEDSDEPPPDDNSGWDIDF) form a disordered region. The segment covering 652–661 (FPEDSDEPPP) has biased composition (acidic residues).

This sequence belongs to the protein kinase superfamily. AGC Ser/Thr protein kinase family. cGMP subfamily. In terms of assembly, isoform alpha: parallel homodimer or heterodimer and also heterotetramer. Interacts directly with PPP1R12A. Non-covalent dimer of dimer of PRKG1-PRKG1 and PPP1R12A-PPP1R12A. This interaction targets PRKG1 to stress fibers to mediate smooth muscle cell relaxation and vasodilation in responses to rises in cGMP. Isoform beta: antiparallel homodimer. Part of cGMP kinase signaling complex at least composed of ACTA2/alpha-actin, CNN1/calponin H1, PLN/phospholamban, PRKG1 and ITPR1. Interacts with IRAG1. Forms a stable complex with ITPR1, IRAG1, and isoform beta of PRKG1. Interacts with TRPC7 (via ankyrin repeat domain). Isoform alpha interacts with RGS2. Interacts with GTF2I. Post-translationally, autophosphorylation increases kinase activity. In terms of processing, 65 kDa monomer is produced by proteolytic cleavage. Detected in cerebellum, hippocampus, dorsomedial hypothalamus, medulla, subcommissural organ, cerebral cortex, amygdala, habenulae, various hypothalamic regions, olfactory bulb, pituitary gland, and retina. Isoform alpha is prominent in the cerebellum and medulla, whereas isoform Beta is predominant in the cortex, hippocampus, hypothalamus, and olfactory bulb.

The protein resides in the cytoplasm. It catalyses the reaction L-seryl-[protein] + ATP = O-phospho-L-seryl-[protein] + ADP + H(+). The catalysed reaction is L-threonyl-[protein] + ATP = O-phospho-L-threonyl-[protein] + ADP + H(+). With respect to regulation, in the absence of cGMP, PRKG1 activity is suppressed by autoinhibitory contacts. Serine/threonine protein kinase that acts as a key mediator of the nitric oxide (NO)/cGMP signaling pathway. GMP binding activates PRKG1, which phosphorylates serines and threonines on many cellular proteins. Numerous protein targets for PRKG1 phosphorylation are implicated in modulating cellular calcium, but the contribution of each of these targets may vary substantially among cell types. Proteins that are phosphorylated by PRKG1 regulate platelet activation and adhesion, smooth muscle contraction, cardiac function, gene expression, feedback of the NO-signaling pathway, and other processes involved in several aspects of the CNS like axon guidance, hippocampal and cerebellar learning, circadian rhythm and nociception. Smooth muscle relaxation is mediated through lowering of intracellular free calcium, by desensitization of contractile proteins to calcium, and by decrease in the contractile state of smooth muscle or in platelet activation. Regulates intracellular calcium levels via several pathways: phosphorylates IRAG1 and inhibits IP3-induced Ca(2+) release from intracellular stores, phosphorylation of KCNMA1 (BKCa) channels decreases intracellular Ca(2+) levels, which leads to increased opening of this channel. PRKG1 phosphorylates the canonical transient receptor potential channel (TRPC) family which inactivates the associated inward calcium current. Another mode of action of NO/cGMP/PKGI signaling involves PKGI-mediated inactivation of the Ras homolog gene family member A (RhoA). Phosphorylation of RHOA by PRKG1 blocks the action of this protein in myriad processes: regulation of RHOA translocation; decreasing contraction; controlling vesicle trafficking, reduction of myosin light chain phosphorylation resulting in vasorelaxation. Activation of PRKG1 by NO signaling also alters gene expression in a number of tissues. In smooth muscle cells, increased cGMP and PRKG1 activity influence expression of smooth muscle-specific contractile proteins, levels of proteins in the NO/cGMP signaling pathway, down-regulation of the matrix proteins osteopontin and thrombospondin-1 to limit smooth muscle cell migration and phenotype. Regulates vasodilator-stimulated phosphoprotein (VASP) functions in platelets and smooth muscle. In Mus musculus (Mouse), this protein is cGMP-dependent protein kinase 1 (Prkg1).